The chain runs to 161 residues: Calmodulin-like protein (161 aa).

EF-hand domains are found at residues 21 to 56, 57 to 92, 93 to 128, and 129 to 161; these read EEID…LGQN, PTEQ…MMKE, TDSE…MGMQ, and FSEE…MSNQ. Residues Asp-34, Asp-36, Asn-38, Thr-40, Glu-45, Asp-70, Asp-72, Asn-74, Gln-76, Glu-81, Asp-106, Asp-108, Asn-110, Glu-117, Asp-142, Asp-144, Asp-146, Glu-148, and Glu-153 each contribute to the Ca(2+) site.

It belongs to the calmodulin family.

This protein resembles calmodulin in sequence but possibly resembles troponin C in function. The chain is Calmodulin-like protein (cal-1) from Caenorhabditis elegans.